Here is a 60-residue protein sequence, read N- to C-terminus: Large ribosomal subunit protein bL32 (60 aa).

A disordered region spans residues 1 to 46; sequence MAVQQNKKSPSKRGMHRSHNALNTPGTAIEPTTGEVHLRHHISPTG. Over residues 9–19 the composition is skewed to basic residues; the sequence is SPSKRGMHRSH.

It belongs to the bacterial ribosomal protein bL32 family.

The protein is Large ribosomal subunit protein bL32 of Leptothrix cholodnii (strain ATCC 51168 / LMG 8142 / SP-6) (Leptothrix discophora (strain SP-6)).